Consider the following 391-residue polypeptide: Glycerophosphocholine acyltransferase 1 (391 aa).

The Cytoplasmic portion of the chain corresponds to 1–66 (MSNNEDPINE…IAKQAEEHES (66 aa)). A helical membrane pass occupies residues 67 to 87 (FINKVTHLLGVLGFGGFCFLL). Residues 88-92 (GARPQ) are Lumenal-facing. The chain crosses the membrane as a helical span at residues 93 to 113 (DIPYVYCLFFFIFVPLRWIYY). The Cytoplasmic segment spans residues 114 to 119 (RFKKWH). The chain crosses the membrane as a helical span at residues 120–140 (YFLLDFCYYANTIFLVDLLLY). Topologically, residues 141–144 (PKDE) are lumenal. Residues 145–165 (KLFMVCFSFAEGPLAWALIVW) traverse the membrane as a helical segment. Residues 166-172 (RCSLVFS) are Cytoplasmic-facing. The chain crosses the membrane as a helical span at residues 173-193 (SVDKIVSVLIHLLPGLVFFTI). Residues 194-226 (RWWNPATFEAMHPEGTSGRASWPYVEDKSFLFT) lie on the Lumenal side of the membrane. Residues 227–247 (WLFLVPLVAYFLWQLLYFLIV) traverse the membrane as a helical segment. Topologically, residues 248–294 (NVLRRQRLLRDPEVMTSYRELSKKAQKANNVWWRLSGLLGDQNRMLM) are cytoplasmic. The helical transmembrane segment at 295–315 (YILLQALFTVATTALTVPIFL) threads the bilayer. At 316-318 (SYE) the chain is on the lumenal side. Residues 319–339 (LHAVFQILKVSAAVWNGGSFL) form a helical membrane-spanning segment. Residues 340–391 (LDVMPRQVILKEKKKSELQPAHIQQYHSEPKQDQSPNSMEIRMKTIHSAEEQ) lie on the Cytoplasmic side of the membrane. The disordered stretch occupies residues 354-391 (KSELQPAHIQQYHSEPKQDQSPNSMEIRMKTIHSAEEQ). A compositionally biased stretch (basic and acidic residues) spans 380 to 391 (IRMKTIHSAEEQ).

This sequence belongs to the GPC1 family.

The protein resides in the membrane. The catalysed reaction is sn-glycerol 3-phosphocholine + an acyl-CoA = a monoacyl-sn-glycero-3-phosphocholine + CoA. It carries out the reaction sn-glycero-3-phosphoethanolamine + an acyl-CoA = a monoacyl-sn-glycero-3-phosphoethanolamine + CoA. It catalyses the reaction sn-glycerol 3-phosphocholine + hexadecanoyl-CoA = hexadecanoyl-sn-glycero-3-phosphocholine + CoA. The enzyme catalyses (9Z)-hexadecenoyl-CoA + sn-glycerol 3-phosphocholine = (9Z-hexadecenoyl)-sn-glycero-3-phosphocholine + CoA. The catalysed reaction is (9Z,12Z)-octadecadienoyl-CoA + sn-glycerol 3-phosphocholine = (9Z,12Z-octadecadienoyl)-sn-glycero-3-phosphocholine + CoA. It carries out the reaction (12R)-hydroxy-(9Z)-octadecenoyl-CoA + sn-glycerol 3-phosphocholine = (12R-hydroxy-9Z-octadecenoyl)-sn-glycero-3-phosphocholine + CoA. It catalyses the reaction (9Z,12Z,15Z)-octadecatrienoyl-CoA + sn-glycerol 3-phosphocholine = (9Z,12Z,15Z-octadecatrienoyl)-sn-glycero-3-phosphocholine + CoA. The enzyme catalyses sn-glycerol 3-phosphocholine + (9Z)-octadecenoyl-CoA = (9Z-octadecenoyl)-sn-glycero-3-phosphocholine + CoA. Glycerophosphocholine acyltransferase (GPCAT) that utilizes acyl-CoA to acylate glycero-3-phosphocholine (GPC), forming lysophosphatidylcholine (LPC). Shows broad acyl specificities with a preference for 16:0-CoA, polyunsaturated acyl-CoA, and the hydroxylated ricinoleoyl-CoA. Also catalyzes the acylation of glycero-3-phosphoethanolamine (GPE) with acyl-CoA. In addition to acyl-CoA, GPCAT efficiently utilizes LPC and lysophosphatidylethanolamine (LPE) as acyl donors in the acylation of GPC. Contributes to the maintenance of phosphatidylcholine (PC) homeostasis and might also have specific functions in acyl editing of PC, such as transferring acyl groups modified at the sn-2 position of PC to the sn-1. In Ricinus communis (Castor bean), this protein is Glycerophosphocholine acyltransferase 1.